Consider the following 109-residue polypeptide: MSNIGIDVKAPENVCEDVNCPFHGTLSVRGQIFEGVVSGDKGHNTIVIKREVTGYISKYERYEKRTTSLVAHNPPCINAKTGDVVKVMECRPVSKTKSFVVIEKTENLE.

This sequence belongs to the universal ribosomal protein uS17 family. In terms of assembly, part of the 30S ribosomal subunit.

Its function is as follows. One of the primary rRNA binding proteins, it binds specifically to the 5'-end of 16S ribosomal RNA. In Methanococcus vannielii, this protein is Small ribosomal subunit protein uS17.